The following is a 515-amino-acid chain: 1-pyrroline-5-carboxylate dehydrogenase (515 aa).

Residues glutamate 286 and cysteine 320 contribute to the active site.

This sequence belongs to the aldehyde dehydrogenase family. RocA subfamily.

The enzyme catalyses L-glutamate 5-semialdehyde + NAD(+) + H2O = L-glutamate + NADH + 2 H(+). It functions in the pathway amino-acid degradation; L-proline degradation into L-glutamate; L-glutamate from L-proline: step 2/2. The sequence is that of 1-pyrroline-5-carboxylate dehydrogenase from Geobacillus sp. (strain WCH70).